The following is a 745-amino-acid chain: Protein PHOX1 (745 aa).

Basic residues predominate over residues 1 to 10 (MGKPTGKKKN). Residues 1–37 (MGKPTGKKKNNNYTEMPPTESSTTGGGKTGKSFDRSA) are disordered. TPR repeat units follow at residues 52-85 (ALEL…LPRD), 90-125 (AYLR…SPRF), and 126-159 (SKAL…EPEN). The PB1 domain occupies 280-359 (TRTVKLVHGD…GSFRLYIAEV (80 aa)). 4 TPR repeats span residues 406–441 (EHWI…YTEA), 443–472 (EDIV…AMFN), 494–528 (ETIL…KSDF), and 553–586 (GEVD…WEEM).

As to quaternary structure, interacts with myosin XI-1 and XI-K.

Its subcellular location is the cytoplasmic vesicle membrane. Its function is as follows. Carboxylate clamp type tetratricopeptide repeat protein that may act as a potential Hsp90/Hsp70 co-chaperone. Contributes to polar growth of root hairs. In Arabidopsis thaliana (Mouse-ear cress), this protein is Protein PHOX1.